The chain runs to 699 residues: Keratinocyte proline-rich protein (699 aa).

Phosphoserine is present on S436. Pro residues-rich tracts occupy residues 448-477 (PYPRPEPCPSPEPRPCPRPRPRPEPCPSPE) and 513-533 (DPCPSPEPRPRPCPEPCPSPE). Residues 448–533 (PYPRPEPCPS…PCPEPCPSPE (86 aa)) are disordered.

In terms of tissue distribution, expressed in the stratified squamous epithelial layers of the skin, esophagus and tongue.

Its subcellular location is the cytoplasm. The chain is Keratinocyte proline-rich protein (Kprp) from Rattus norvegicus (Rat).